Reading from the N-terminus, the 325-residue chain is Tetraacyldisaccharide 4'-kinase (325 aa).

55–62 (TAGGNGKT) is a binding site for ATP.

Belongs to the LpxK family.

The enzyme catalyses a lipid A disaccharide + ATP = a lipid IVA + ADP + H(+). Its pathway is glycolipid biosynthesis; lipid IV(A) biosynthesis; lipid IV(A) from (3R)-3-hydroxytetradecanoyl-[acyl-carrier-protein] and UDP-N-acetyl-alpha-D-glucosamine: step 6/6. In terms of biological role, transfers the gamma-phosphate of ATP to the 4'-position of a tetraacyldisaccharide 1-phosphate intermediate (termed DS-1-P) to form tetraacyldisaccharide 1,4'-bis-phosphate (lipid IVA). The polypeptide is Tetraacyldisaccharide 4'-kinase (Salmonella paratyphi B (strain ATCC BAA-1250 / SPB7)).